Reading from the N-terminus, the 242-residue chain is Small ribosomal subunit protein uS3 (242 aa).

In terms of domain architecture, KH type-2 spans 39 to 110 (IRRFIHKKYG…QVRINVVEVE (72 aa)). The interval 217-242 (TMPVGASPRRRGNRRPQQFEDRSNEG) is disordered. The span at 233 to 242 (QQFEDRSNEG) shows a compositional bias: basic and acidic residues.

The protein belongs to the universal ribosomal protein uS3 family. Part of the 30S ribosomal subunit. Forms a tight complex with proteins S10 and S14.

Its function is as follows. Binds the lower part of the 30S subunit head. Binds mRNA in the 70S ribosome, positioning it for translation. The chain is Small ribosomal subunit protein uS3 from Prochlorococcus marinus (strain MIT 9313).